The sequence spans 360 residues: Histidinol-phosphate aminotransferase (360 aa).

Lysine 222 bears the N6-(pyridoxal phosphate)lysine mark.

It belongs to the class-II pyridoxal-phosphate-dependent aminotransferase family. Histidinol-phosphate aminotransferase subfamily. As to quaternary structure, homodimer. The cofactor is pyridoxal 5'-phosphate.

The enzyme catalyses L-histidinol phosphate + 2-oxoglutarate = 3-(imidazol-4-yl)-2-oxopropyl phosphate + L-glutamate. Its pathway is amino-acid biosynthesis; L-histidine biosynthesis; L-histidine from 5-phospho-alpha-D-ribose 1-diphosphate: step 7/9. This chain is Histidinol-phosphate aminotransferase, found in Listeria welshimeri serovar 6b (strain ATCC 35897 / DSM 20650 / CCUG 15529 / CIP 8149 / NCTC 11857 / SLCC 5334 / V8).